Reading from the N-terminus, the 639-residue chain is Extracellular metalloproteinase NpIII (639 aa).

Residues 1–16 form the signal peptide; that stretch reads MHMLLFIGALALPVFV. Residues 17–245 constitute a propeptide that is removed on maturation; it reads CTQSCEPASL…IHGVVDYVSE (229 aa). N287, N320, N336, and N368 each carry an N-linked (GlcNAc...) asparagine glycan. H429 lines the Zn(2+) pocket. The active site involves E430. H433 is a Zn(2+) binding site. Residue N509 is glycosylated (N-linked (GlcNAc...) asparagine).

It belongs to the peptidase M36 family. The cofactor is Zn(2+).

It localises to the secreted. In terms of biological role, secreted metalloproteinase that allows assimilation of proteinaceous substrates. The sequence is that of Extracellular metalloproteinase NpIII (NpIII) from Aspergillus oryzae (strain ATCC 42149 / RIB 40) (Yellow koji mold).